The following is a 92-amino-acid chain: DNA/RNA-binding protein Alba (92 aa).

K11 carries the N6-acetyllysine modification.

It belongs to the histone-like Alba family. In terms of processing, acetylated. Acetylation at Lys-11 decreases DNA-binding affinity.

It localises to the cytoplasm. The protein resides in the chromosome. Functionally, binds double-stranded DNA tightly but without sequence specificity. Involved in DNA compaction. In Pyrobaculum neutrophilum (strain DSM 2338 / JCM 9278 / NBRC 100436 / V24Sta) (Thermoproteus neutrophilus), this protein is DNA/RNA-binding protein Alba.